The following is a 211-amino-acid chain: Pyridoxine/pyridoxamine 5'-phosphate oxidase (211 aa).

Residues 7–10 (RREY) and Lys65 each bind substrate. Residues 60-65 (RIVLLK), 75-76 (YT), Arg81, Lys82, and Gln104 each bind FMN. Substrate is bound by residues Tyr122, Arg126, and Ser130. FMN contacts are provided by residues 139-140 (QS) and Trp184. 190–192 (RLH) is a substrate binding site. Arg194 provides a ligand contact to FMN.

This sequence belongs to the pyridoxamine 5'-phosphate oxidase family. Homodimer. The cofactor is FMN.

The catalysed reaction is pyridoxamine 5'-phosphate + O2 + H2O = pyridoxal 5'-phosphate + H2O2 + NH4(+). The enzyme catalyses pyridoxine 5'-phosphate + O2 = pyridoxal 5'-phosphate + H2O2. The protein operates within cofactor metabolism; pyridoxal 5'-phosphate salvage; pyridoxal 5'-phosphate from pyridoxamine 5'-phosphate: step 1/1. It participates in cofactor metabolism; pyridoxal 5'-phosphate salvage; pyridoxal 5'-phosphate from pyridoxine 5'-phosphate: step 1/1. Its function is as follows. Catalyzes the oxidation of either pyridoxine 5'-phosphate (PNP) or pyridoxamine 5'-phosphate (PMP) into pyridoxal 5'-phosphate (PLP). This is Pyridoxine/pyridoxamine 5'-phosphate oxidase from Vibrio parahaemolyticus serotype O3:K6 (strain RIMD 2210633).